A 327-amino-acid chain; its full sequence is MSLSPPNNLEHIITSQTLKWVFVGGKGGVGKTTTSCSLGVLIANRNPQKKVLIISTDPAHNTSDAFDIKFGAEPKAVPGVPNLSVMEVDVKDAMKGMFDGVEQGTNQNGEFGLLSEITGMVGMFKSVPGIDEAIAFSKIINQAQQMNYDLVLFDTAPTGHTLRFLSLPSVLRDMLEKVIKLQELFGPMMSQFGGIIGTNINFNELKPKMEDMLKTSEQIVKDFTNPNLTTFIPVLIPEFLPLYETERLIQELMNLNMDVNSIIVNQILPVNDCCDYCKNKRSVQAKYLGQIDVLYSDFHLIKINMQTNEVRGVPALCAFSKNFEAKH.

26 to 33 (KGGVGKTT) contacts ATP. Asp57 is a catalytic residue. Glu238 and Asn265 together coordinate ATP. 2 residues coordinate Zn(2+): Cys274 and Cys277.

Belongs to the arsA ATPase family. As to quaternary structure, homodimer.

It is found in the cytoplasm. The protein localises to the endoplasmic reticulum. Its function is as follows. ATPase required for the post-translational delivery of tail-anchored (TA) proteins to the endoplasmic reticulum. Recognizes and selectively binds the transmembrane domain of TA proteins in the cytosol. This complex then targets to the endoplasmic reticulum by membrane-bound receptors, where the tail-anchored protein is released for insertion. This process is regulated by ATP binding and hydrolysis. ATP binding drives the homodimer towards the closed dimer state, facilitating recognition of newly synthesized TA membrane proteins. ATP hydrolysis is required for insertion. Subsequently, the homodimer reverts towards the open dimer state, lowering its affinity for the membrane-bound receptor, and returning it to the cytosol to initiate a new round of targeting. The sequence is that of ATPase ASNA1 homolog from Entamoeba dispar (strain ATCC PRA-260 / SAW760).